We begin with the raw amino-acid sequence, 231 residues long: Flagellar L-ring protein (231 aa).

Positions 1 to 18 are cleaved as a signal peptide; sequence MNRFICVLALSGSAVLAG. C19 carries N-palmitoyl cysteine lipidation. Residue C19 is the site of S-diacylglycerol cysteine attachment.

Belongs to the FlgH family. The basal body constitutes a major portion of the flagellar organelle and consists of four rings (L,P,S, and M) mounted on a central rod.

The protein localises to the cell outer membrane. It localises to the bacterial flagellum basal body. Functionally, assembles around the rod to form the L-ring and probably protects the motor/basal body from shearing forces during rotation. This Pseudomonas fluorescens (strain ATCC BAA-477 / NRRL B-23932 / Pf-5) protein is Flagellar L-ring protein.